The primary structure comprises 906 residues: Aconitate hydratase A (906 aa).

A propeptide spanning residues 1 to 2 (MS) is cleaved from the precursor. Residues Cys-441, Cys-507, and Cys-510 each contribute to the [4Fe-4S] cluster site.

It belongs to the aconitase/IPM isomerase family. In terms of assembly, monomer. It depends on [4Fe-4S] cluster as a cofactor.

The enzyme catalyses citrate = D-threo-isocitrate. The catalysed reaction is (2S,3R)-3-hydroxybutane-1,2,3-tricarboxylate = 2-methyl-cis-aconitate + H2O. It participates in carbohydrate metabolism; tricarboxylic acid cycle; isocitrate from oxaloacetate: step 2/2. The protein operates within organic acid metabolism; propanoate degradation. Involved in the catabolism of short chain fatty acids (SCFA) via the tricarboxylic acid (TCA)(acetyl degradation route) and probably the 2-methylcitrate cycle I (propionate degradation route). Catalyzes the reversible isomerization of citrate to isocitrate via cis-aconitate. Could catalyze the hydration of 2-methyl-cis-aconitate to yield (2R,3S)-2-methylisocitrate. The apo form of AcnA functions as a RNA-binding regulatory protein. This Deinococcus radiodurans (strain ATCC 13939 / DSM 20539 / JCM 16871 / CCUG 27074 / LMG 4051 / NBRC 15346 / NCIMB 9279 / VKM B-1422 / R1) protein is Aconitate hydratase A (acn).